We begin with the raw amino-acid sequence, 208 residues long: Ypt/Rab-type GTPase YPT7 (208 aa).

GTP contacts are provided by residues 17–23 (SGVGKTS), 33–40 (YSQQYKAT), Gly-67, and 126–129 (NKID). An Effector region motif is present at residues 37–45 (YKATIGADF). Lys-147 participates in a covalent cross-link: Glycyl lysine isopeptide (Lys-Gly) (interchain with G-Cter in ubiquitin). 158-160 (SAK) provides a ligand contact to GTP. S-geranylgeranyl cysteine attachment occurs at residues Cys-206 and Cys-208. Cys-208 carries the cysteine methyl ester modification.

The protein belongs to the small GTPase superfamily. Rab family. In terms of assembly, interacts with IVY1. Interacts with YIF1, YIP4 and YIP5. Interacts with the HOPS complex. Interacts with the class C-Vps complex. Interacts with VPS35. Interacts with VPS39. Interacts with the GDP dissociation inhibitor GDI1. Interacts with CCZ1.

The protein resides in the late endosome. Its subcellular location is the vacuole membrane. With respect to regulation, rab activation is generally mediated by a guanine exchange factor (GEF), while inactivation through hydrolysis of bound GTP is catalyzed by a GTPase activating protein (GAP). YPT7 is activated by GEFs MON1-CCZ1 complex (MC1) and VAM6/VPS39, and inactivated by GAPs GYP7 and GYP1. Its function is as follows. Ypt/Rab-type GTPases are key regulators of membrane trafficking and intracellular vesicular transport. They act as molecular switches that convert between GTP-bound and GDP-bound states, and regulate virtually all steps of membrane traffic from the formation of the transport vesicle at the donor membrane to its fusion at the target membrane. In the GDP-bound state, Ypt proteins are predominantly cytosolic, solubilized through the interaction with a GDP dissociation inhibitor (GDI). In the GTP-bound state, the proteins are membrane bound and interact with specific effector proteins that select cargo, promote vesicle movement, or verify the correct site of fusion. Involved in regulation of vesicular protein transport in exo- and endocytosis. Involved in regulation of late endosome to vacuole trafficking and homotypic vacuole fusion, by interacting in its GTP-bound state on the donor membrane with the large multiprotein HOPS/class C-Vps tethering complex on the acceptor membrane. Involved in retromer assembly and cargo export, recognizing the cargo selection complex (CSC). GTP-bound YPT7 recruits CSC to vacuolar membranes via retromer subunit VPS35. Interacts with the HOPS complex subunit VPS39 independent of the HOPS complex at mitochondria-vacuole contact sites (vCLAMPs), providing a physical and metabolic interconnection between the endocytic pathway and mitochondria. This Saccharomyces cerevisiae (strain ATCC 204508 / S288c) (Baker's yeast) protein is Ypt/Rab-type GTPase YPT7 (YPT7).